Reading from the N-terminus, the 474-residue chain is tRNA-2-methylthio-N(6)-dimethylallyladenosine synthase (474 aa).

The region spanning 3–120 (KKLHIKTWGC…LPEMINSVRG (118 aa)) is the MTTase N-terminal domain. 6 residues coordinate [4Fe-4S] cluster: C12, C49, C83, C157, C161, and C164. The 233-residue stretch at 143-375 (RAEGPTAFVS…QERINQQAMA (233 aa)) folds into the Radical SAM core domain. The region spanning 378–441 (RRMLGTTQRI…PNSLRGKVVR (64 aa)) is the TRAM domain.

The protein belongs to the methylthiotransferase family. MiaB subfamily. In terms of assembly, monomer. [4Fe-4S] cluster serves as cofactor.

It is found in the cytoplasm. It catalyses the reaction N(6)-dimethylallyladenosine(37) in tRNA + (sulfur carrier)-SH + AH2 + 2 S-adenosyl-L-methionine = 2-methylsulfanyl-N(6)-dimethylallyladenosine(37) in tRNA + (sulfur carrier)-H + 5'-deoxyadenosine + L-methionine + A + S-adenosyl-L-homocysteine + 2 H(+). In terms of biological role, catalyzes the methylthiolation of N6-(dimethylallyl)adenosine (i(6)A), leading to the formation of 2-methylthio-N6-(dimethylallyl)adenosine (ms(2)i(6)A) at position 37 in tRNAs that read codons beginning with uridine. The polypeptide is tRNA-2-methylthio-N(6)-dimethylallyladenosine synthase (Escherichia coli (strain UTI89 / UPEC)).